A 313-amino-acid polypeptide reads, in one-letter code: Ribosomal RNA small subunit methyltransferase H (313 aa).

Residues 35–37, Asp-55, Phe-80, Asp-102, and Gln-109 contribute to the S-adenosyl-L-methionine site; that span reads GGH.

The protein belongs to the methyltransferase superfamily. RsmH family.

It is found in the cytoplasm. It carries out the reaction cytidine(1402) in 16S rRNA + S-adenosyl-L-methionine = N(4)-methylcytidine(1402) in 16S rRNA + S-adenosyl-L-homocysteine + H(+). In terms of biological role, specifically methylates the N4 position of cytidine in position 1402 (C1402) of 16S rRNA. This chain is Ribosomal RNA small subunit methyltransferase H, found in Shewanella denitrificans (strain OS217 / ATCC BAA-1090 / DSM 15013).